The primary structure comprises 366 residues: uncharacterized protein (366 aa).

Residues 64–289 form the OBG-type G domain; it reads GTVGFIGFPS…LKETMWDYLN (226 aa). Residues 70–77, 116–120, and 247–250 each bind GTP; these read GFPSVGKS, DLPGI, and NKID. In terms of domain architecture, TGS spans 289–365; sequence NLVRVYTRPR…LDEDVVTIVK (77 aa).

The protein belongs to the TRAFAC class OBG-HflX-like GTPase superfamily. OBG GTPase family.

This is an uncharacterized protein from Schizosaccharomyces pombe (strain 972 / ATCC 24843) (Fission yeast).